The sequence spans 256 residues: Alcohol dehydrogenase (256 aa).

12 to 35 (FVAGLGGIGLDTSKELVKRDLKNL) provides a ligand contact to NAD(+). S140 provides a ligand contact to substrate. The Proton acceptor role is filled by Y153.

It belongs to the short-chain dehydrogenases/reductases (SDR) family. Homodimer.

It carries out the reaction a primary alcohol + NAD(+) = an aldehyde + NADH + H(+). The catalysed reaction is a secondary alcohol + NAD(+) = a ketone + NADH + H(+). The polypeptide is Alcohol dehydrogenase (Adh) (Drosophila orena (Fruit fly)).